We begin with the raw amino-acid sequence, 322 residues long: Probable L-asparaginase (322 aa).

The Asparaginase/glutaminase domain maps to 6 to 320; the sequence is PRLALIHTGG…EDIRRVFTQG (315 aa). Residues 13–37 form a disordered region; sequence TGGTIASRPSPDGRGLTPQTPPALP. The O-isoaspartyl threonine intermediate role is filled by threonine 16. Residues serine 54 and 85–86 each bind substrate; that span reads TD.

Belongs to the asparaginase 1 family.

The protein resides in the cytoplasm. The catalysed reaction is L-asparagine + H2O = L-aspartate + NH4(+). The polypeptide is Probable L-asparaginase (ansA) (Deinococcus radiodurans (strain ATCC 13939 / DSM 20539 / JCM 16871 / CCUG 27074 / LMG 4051 / NBRC 15346 / NCIMB 9279 / VKM B-1422 / R1)).